A 120-amino-acid chain; its full sequence is MSGRAQRQHPGRLTKRAEFLAVQRGLKLRGRLFLLELLARGDDDPPRVGITVTKKVGNAVERNRIRRRLREAVRVHAADDMATGTDYVIVGRREILDAPFGALKDELSRRIRGNKPARTG.

The protein belongs to the RnpA family. In terms of assembly, consists of a catalytic RNA component (M1 or rnpB) and a protein subunit.

The enzyme catalyses Endonucleolytic cleavage of RNA, removing 5'-extranucleotides from tRNA precursor.. In terms of biological role, RNaseP catalyzes the removal of the 5'-leader sequence from pre-tRNA to produce the mature 5'-terminus. It can also cleave other RNA substrates such as 4.5S RNA. The protein component plays an auxiliary but essential role in vivo by binding to the 5'-leader sequence and broadening the substrate specificity of the ribozyme. The sequence is that of Ribonuclease P protein component from Chelativorans sp. (strain BNC1).